The sequence spans 859 residues: Probable helicase A859L (859 aa).

Residues 178–349 form the Helicase ATP-binding domain; it reads YQELRRSGRA…KNRELFGGVA (172 aa). 191-198 is a binding site for ATP; sequence MACRCGKT. The DEAH box motif lies at 298–301; it reads DECH. The Helicase C-terminal domain maps to 394–553; that stretch reads QIIMALAYLK…RFYEHLLNPS (160 aa).

It belongs to the asfivirus helicase A859L family.

The chain is Probable helicase A859L from Ornithodoros (relapsing fever ticks).